We begin with the raw amino-acid sequence, 587 residues long: Nucleoporin p58/p45 (587 aa).

5 repeat units span residues 7–8, 30–31, 44–45, 63–64, and 68–69. Residues 7-567 form a 14 X 2 AA repeats of F-G region; it reads FGSGTLGSTT…VSNPASAGFG (561 aa). The disordered stretch occupies residues 196-236; it reads TSAASNEGLGGIDFSTSSDKKSDKTGTRPEDSKALKDENLP. Basic and acidic residues predominate over residues 213-234; sequence SDKKSDKTGTRPEDSKALKDEN. 2 coiled-coil regions span residues 244-264 and 302-369; these read ENLQ…SRMS and ETAQ…SHIT. The residue at position 319 (T319) is a Phosphothreonine. 9 consecutive repeat copies span residues 476–477, 480–481, 501–502, 507–508, 517–518, 519–520, 533–534, 556–557, and 566–567. A disordered region spans residues 565 to 587; the sequence is GFGTGGQLLQLKRPPAGNKRGKR.

The protein belongs to the NUP58 family. As to quaternary structure, component of the p62 complex, a complex at least composed of NUP62, NUP54, and NUP58. Interacts with NUTF2. Interacts with SRP1-alpha and Importin p97 proteins when they are together, but not with SRP1-alpha protein alone. In terms of processing, O-glycosylated.

The protein resides in the nucleus. Its subcellular location is the nuclear pore complex. The protein localises to the nucleus membrane. Functionally, component of the nuclear pore complex, a complex required for the trafficking across the nuclear membrane. This Mus musculus (Mouse) protein is Nucleoporin p58/p45.